Reading from the N-terminus, the 516-residue chain is GTPase Obg (516 aa).

An Obg domain is found at 4 to 161; the sequence is PTFVDRVTLH…LEIVLELKVV (158 aa). The region spanning 162 to 332 is the OBG-type G domain; that stretch reads ADIGLVGFPS…LTFAMAGIVE (171 aa). GTP contacts are provided by residues 168–175, 193–197, 214–217, 284–287, and 313–315; these read GFPSAGKS, FTTLV, DVPG, NKVD, and SAA. Ser-175 and Thr-195 together coordinate Mg(2+). An OCT domain is found at 351–432; the sequence is PSVDGSDAFT…ENAVVFDFKP (82 aa). Over residues 466 to 491 the composition is skewed to basic and acidic residues; it reads AMADRAEGETRADVARRLDRPAREDG. The disordered stretch occupies residues 466–516; sequence AMADRAEGETRADVARRLDRPAREDGGAYGPQSYEIGGRDDPDWAEEDLGE.

The protein belongs to the TRAFAC class OBG-HflX-like GTPase superfamily. OBG GTPase family. As to quaternary structure, monomer. Requires Mg(2+) as cofactor.

The protein localises to the cytoplasm. Functionally, an essential GTPase which binds GTP, GDP and possibly (p)ppGpp with moderate affinity, with high nucleotide exchange rates and a fairly low GTP hydrolysis rate. Plays a role in control of the cell cycle, stress response, ribosome biogenesis and in those bacteria that undergo differentiation, in morphogenesis control. In Nocardioides sp. (strain ATCC BAA-499 / JS614), this protein is GTPase Obg.